The primary structure comprises 260 residues: Phosphatidylglycerol--prolipoprotein diacylglyceryl transferase (260 aa).

Helical transmembrane passes span 17 to 37, 52 to 72, 85 to 105, and 113 to 133; these read VVKW…SWIF, LTAA…LHVI, ILSG…IGLW, and FNLG…QAIG. Arg134 serves as a coordination point for a 1,2-diacyl-sn-glycero-3-phospho-(1'-sn-glycerol). 3 consecutive transmembrane segments (helical) span residues 170–190, 198–218, and 227–247; these read VPTQ…SLFI, GQLF…IGFV, and GLEQ…PFFI.

The protein belongs to the Lgt family.

The protein localises to the cell membrane. The enzyme catalyses L-cysteinyl-[prolipoprotein] + a 1,2-diacyl-sn-glycero-3-phospho-(1'-sn-glycerol) = an S-1,2-diacyl-sn-glyceryl-L-cysteinyl-[prolipoprotein] + sn-glycerol 1-phosphate + H(+). It participates in protein modification; lipoprotein biosynthesis (diacylglyceryl transfer). Catalyzes the transfer of the diacylglyceryl group from phosphatidylglycerol to the sulfhydryl group of the N-terminal cysteine of a prolipoprotein, the first step in the formation of mature lipoproteins. This Dehalococcoides mccartyi (strain ATCC BAA-2266 / KCTC 15142 / 195) (Dehalococcoides ethenogenes (strain 195)) protein is Phosphatidylglycerol--prolipoprotein diacylglyceryl transferase.